The chain runs to 619 residues: Mitogen-activated protein kinase kinase kinase 2 (619 aa).

The segment at 25 to 45 (LSLQETRKAKSSSPKKQNDVR) is disordered. Serine 26 carries the post-translational modification Phosphoserine. One can recognise a PB1 domain in the interval 43 to 122 (DVRVKFEHRG…KSLKILLVIN (80 aa)). Serine 153, serine 159, and serine 164 each carry phosphoserine. 3 disordered regions span residues 154–173 (IIGP…IPDE), 201–248 (LDPL…QEFS), and 289–355 (RTQG…APTN). The span at 203 to 219 (PLSLSSPENSGSGSCPS) shows a compositional bias: low complexity. A phosphoserine mark is found at serine 239, serine 297, serine 311, serine 331, serine 344, and serine 349. Residues 290-299 (TQGTSLRSPV) are compositionally biased toward polar residues. The segment covering 300 to 315 (SFSPTDHSLSTSSGSS) has biased composition (low complexity). Basic and acidic residues predominate over residues 322–332 (DDSRIRRRGSD). A Protein kinase domain is found at 357–617 (RLGKLLGQGA…DELLRHMFVH (261 aa)). Residues 362–371 (LGQGAFGRVY) and lysine 385 contribute to the ATP site. The active-site Proton acceptor is the aspartate 483.

The protein belongs to the protein kinase superfamily. STE Ser/Thr protein kinase family. MAP kinase kinase kinase subfamily. As to quaternary structure, interacts with PKN2; the interaction activates PKN2 kinase activity in a MAP3K2-independent kinase activity. Self-associates. Binds both upstream activators and downstream substrates in multimolecular complexes. Interacts (via the kinase catalytic domain) with STK38. Interacts with XIAP/BIRC4. Mg(2+) serves as cofactor. In terms of processing, autophosphorylated. Post-translationally, ubiquitination by XIAP/BIRC4 does not lead to proteasomal degradation.

The protein localises to the cytoplasm. The protein resides in the nucleus. The enzyme catalyses L-seryl-[protein] + ATP = O-phospho-L-seryl-[protein] + ADP + H(+). It catalyses the reaction L-threonyl-[protein] + ATP = O-phospho-L-threonyl-[protein] + ADP + H(+). Its activity is regulated as follows. Activated by phosphorylation on Thr-524. In terms of biological role, component of a protein kinase signal transduction cascade. Regulates the JNK and ERK5 pathways by phosphorylating and activating MAP2K5 and MAP2K7. Plays a role in caveolae kiss-and-run dynamics. The protein is Mitogen-activated protein kinase kinase kinase 2 (MAP3K2) of Homo sapiens (Human).